The chain runs to 135 residues: Small ribosomal subunit protein uS11 (135 aa).

The interval 1–26 is disordered; it reads MPPKSRTAGGARKTRRKEKKNVSHGH. The segment covering 12 to 23 has biased composition (basic residues); that stretch reads RKTRRKEKKNVS.

This sequence belongs to the universal ribosomal protein uS11 family. In terms of assembly, part of the 30S ribosomal subunit. Interacts with proteins S7 and S18. Binds to IF-3.

Located on the platform of the 30S subunit, it bridges several disparate RNA helices of the 16S rRNA. Forms part of the Shine-Dalgarno cleft in the 70S ribosome. The protein is Small ribosomal subunit protein uS11 of Beutenbergia cavernae (strain ATCC BAA-8 / DSM 12333 / CCUG 43141 / JCM 11478 / NBRC 16432 / NCIMB 13614 / HKI 0122).